A 137-amino-acid chain; its full sequence is Small ribosomal subunit protein uS9 (137 aa).

Over residues 105–117 the composition is skewed to basic and acidic residues; sequence LKIEGHLSRDPRA. The disordered stretch occupies residues 105–137; sequence LKIEGHLSRDPRAKERRKYGLKKARKAPQFSKR. The segment covering 118 to 137 has biased composition (basic residues); it reads KERRKYGLKKARKAPQFSKR.

This sequence belongs to the universal ribosomal protein uS9 family.

This is Small ribosomal subunit protein uS9 from Prochlorococcus marinus (strain MIT 9211).